Consider the following 469-residue polypeptide: Putative arginine/ornithine antiporter (469 aa).

The next 12 helical transmembrane spans lie at 8 to 28 (GFWL…IFSL), 44 to 64 (AWLL…HLSI), 90 to 110 (AGFT…VAII), 144 to 164 (LTFA…VASI), 179 to 199 (VLGF…SLFG), 213 to 233 (IGIG…FVGI), 254 to 274 (ITGL…TMGV), 301 to 321 (VIMA…WILL), 347 to 367 (SPVI…FSVI), 375 to 395 (FTFL…VSAI), 417 to 437 (DGLI…TGTA), and 439 to 459 (LTTF…YPFV).

Belongs to the amino acid-polyamine-organocation (APC) superfamily. Basic amino acid/polyamine antiporter (APA) (TC 2.A.3.2) family.

The protein localises to the cell membrane. It catalyses the reaction L-ornithine(in) + L-arginine(out) = L-ornithine(out) + L-arginine(in). Functionally, catalyzes electroneutral exchange between L-arginine and L-ornithine. This Bacillus subtilis (strain 168) protein is Putative arginine/ornithine antiporter (yvsH).